The chain runs to 335 residues: Luciferase-like monooxygenase (335 aa).

This sequence to bacterial alkanal monooxygenase alpha and beta chains.

The chain is Luciferase-like monooxygenase (yhbW) from Escherichia coli O6:H1 (strain CFT073 / ATCC 700928 / UPEC).